A 469-amino-acid polypeptide reads, in one-letter code: Citrate synthase, mitochondrial (469 aa).

The N-terminal 28 residues, 1 to 28, are a transit peptide targeting the mitochondrion; it reads MAFFRTVTKLRSRLGQPPSLRDSVRCLQ. Active-site residues include His304, His350, and Asp405.

It belongs to the citrate synthase family. Homodimer.

Its subcellular location is the mitochondrion matrix. The catalysed reaction is oxaloacetate + acetyl-CoA + H2O = citrate + CoA + H(+). Its pathway is carbohydrate metabolism; tricarboxylic acid cycle; isocitrate from oxaloacetate: step 1/2. The sequence is that of Citrate synthase, mitochondrial (MCSI) from Fragaria ananassa (Strawberry).